We begin with the raw amino-acid sequence, 381 residues long: Cyclic AMP-AMP-GMP synthase (381 aa).

Positions 51, 53, 56, 69, 71, and 109 each coordinate ATP. Active-site residues include aspartate 69 and aspartate 71. The Mg(2+) site is built by aspartate 69 and aspartate 71. Aspartate 121 is a catalytic residue. Residues aspartate 121 and aspartate 196 each coordinate Mg(2+). ATP-binding residues include aspartate 196, arginine 197, arginine 204, threonine 205, glutamine 210, lysine 233, and tyrosine 250. 2 residues coordinate Mg(2+): asparagine 258 and leucine 260. Residues valine 304 and arginine 307 each coordinate ATP. Residues 348–381 are disordered; that stretch reads GSKFPLPGPQGGDRNGGFTTPSKPAEPQKTGRFA.

It belongs to the CD-NTase family. D02 subfamily. In terms of assembly, monomer. Crystallizes as a Cap2 homodimer bound on each side by a CdnD monomer. Requires Mg(2+) as cofactor. Post-translationally, in bacteria expressing cap4-dncV-cap2-cap3, this protein is conjugated to a number of other proteins by Cap2, probably via this protein's C-terminal Ala residue. More conjugated DncV is found in the absence of Cap3.

The enzyme catalyses GTP + 2 ATP = 3',3',3'-cAAG + 3 diphosphate. Primed for activation by Cap2 which conjugates it to cellular proteins; activation is target protein-specific (green fluorescent protein does not activate the enzyme), but which protein(s) activate it is unclear. Cyclic nucleotide synthase (second messenger synthase) of a CBASS antivirus system. CBASS (cyclic oligonucleotide-based antiphage signaling system) provides immunity against bacteriophages. The CD-NTase protein (CdnD, this protein) synthesizes cyclic nucleotides in response to infection; these serve as specific second messenger signals. The signals activate a diverse range of effectors, leading to bacterial cell death and thus abortive phage infection. A type II-C(AAG) CBASS system. Functionally, cyclic trinucleotide synthase that catalyzes the synthesis of 3',3',3'-cyclic AMP-AMP-GMP (cAAG) as the major product, a second messenger for cell signal transduction. Uses ATP as the first donor nucleotide, followed by GTP. In terms of biological role, protects E.coli against phage T2 infection. When the cdnD-cap2-cap3-cap4 operon is introduced in E.coli there is a more than 10(3) decrease in the efficiency of T2 plaque formation. The operon does not protect against phage T5 and only about 10-fold against T7. Expression of cdnD-cap4 alone protects E.coli against phage T2 infection. The sequence is that of Cyclic AMP-AMP-GMP synthase from Enterobacter hormaechei subsp. hoffmannii (strain UCI 50).